The sequence spans 651 residues: LysM domain receptor-like kinase 3 (651 aa).

An N-terminal signal peptide occupies residues 1 to 19 (MNLTFYIFFLSLLPSFSSS). N-linked (GlcNAc...) asparagine glycans are attached at residues N2, N23, N42, N73, N86, N100, N114, and N177. Over 20–236 (KPMNCSDTTR…TAKSGSHVPY (217 aa)) the chain is Extracellular. Disulfide bonds link C24/C76, C31/C133, and C74/C131. The LysM domain maps to 142 to 186 (MSYVAMAGDSVQSLSSRFGVSMDRIEDVNGILNLDNITAGDLLYI). The segment at 196–216 (YETSKINPPAPSPAPASSLAN) is disordered. 2 N-linked (GlcNAc...) asparagine glycosylation sites follow: N218 and N225. Residues 237 to 257 (IWIVGGLGVVLALLVLCILVC) traverse the membrane as a helical segment. Residues 258 to 651 (ICLRSSSCSS…QVFSGLVQGR (394 aa)) are Cytoplasmic-facing. Position 330 is a phosphothreonine (T330). Residues 341–628 (FSDSNLLGHG…VVISLSQILL (288 aa)) enclose the Protein kinase domain. ATP contacts are provided by residues 347–355 (LGHGNYGSV) and K368. Y410 carries the phosphotyrosine modification. The active-site Proton acceptor is D464. S468 is subject to Phosphoserine. Phosphothreonine is present on residues T500 and T505. The residue at position 513 (Y513) is a Phosphotyrosine.

Belongs to the protein kinase superfamily. Ser/Thr protein kinase family.

The protein localises to the cell membrane. In terms of biological role, putative Lysin motif (LysM) receptor kinase that may recognize microbe-derived N-acetylglucosamine (NAG)-containing ligands. The chain is LysM domain receptor-like kinase 3 (LYK3) from Arabidopsis thaliana (Mouse-ear cress).